Here is a 585-residue protein sequence, read N- to C-terminus: MIKTIKADLKNKIQKTIKELALSSNIKLDKINIVMQKPPKSEMGDLSILIFEFSKILKLSIPVITQEIIKQIGNEYKTKSMGPYLNIKFNRKEYIQNTIKKVNKEKENYGANNSLQNKKTIIEFSSPNTNKPLHVGHLRNDIIGESLSRILKASGSKVTKINLINDRGTHICKSMLAYKKFGNNITPEIAQKKGDHLIGDFYVKYNEYASQNSEIAENEIQQLLCQWEQGDEKTVQLWTKLNKWAIDGIKETYNTTNITFDKIYLESEIFKIGREVVINGLKEGLCYKREDGAICINIPTEKNNIDNQNFKQKVLLRANGTSIYLTQDLGNIVARKNEFDFDEMIYVVGSEQIHHFKTLFYVADKLGVTNENNLIHLSYGMVNLPEGKMKSREGNIIDADNLIHDLSQSTMLELKKRYENEQNLQKLALNISLGAIHYYLLKTAIHKDILFNKTESLSFTGNSGPYIQYVGARINSILDKYNNLNLANKNTNFDLLVNENEWEIIKIISEFEEYIIKASKDRNPSIIANYSYLLAKNFSTYYQDTKIIDKDNLELTHARIDLAKAVLQTIKNCMHLLNIPYIQKM.

The 'HIGH' region motif lies at 127–137 (PNTNKPLHVGH).

Belongs to the class-I aminoacyl-tRNA synthetase family. In terms of assembly, monomer.

Its subcellular location is the cytoplasm. It carries out the reaction tRNA(Arg) + L-arginine + ATP = L-arginyl-tRNA(Arg) + AMP + diphosphate. This is Arginine--tRNA ligase from Borrelia duttonii (strain Ly).